The sequence spans 686 residues: Protein SDA1 homolog (686 aa).

A phosphoserine mark is found at Ser232, Ser234, and Ser236. Positions 254–315 (KKGSKNKKKL…SCKERFEVKM (62 aa)) form a coiled coil. Positions 484–508 (LEKEENTENDEDGWESASLSEEEED) are disordered. Residues 490-508 (TENDEDGWESASLSEEEED) show a composition bias toward acidic residues. At Thr551 the chain carries Phosphothreonine. Positions 563-586 (MKKEMDAAPGKAQKRKYLDMDSDE) are disordered. 3 positions are modified to phosphoserine: Ser584, Ser588, and Ser594. A disordered region spans residues 604–649 (KPKSDKETRLATAMAGRTDRKEFVRKKTKINPFSSSTNKEKKKQKN).

This sequence belongs to the SDA1 family.

It localises to the nucleus. It is found in the nucleolus. In terms of biological role, required for 60S pre-ribosomal subunits export to the cytoplasm. The protein is Protein SDA1 homolog (Sdad1) of Rattus norvegicus (Rat).